A 508-amino-acid polypeptide reads, in one-letter code: Photosystem II CP47 reaction center protein (508 aa).

Transmembrane regions (helical) follow at residues 21-36 (AVHI…WAGS), 101-115 (IVFS…IWHW), 140-156 (GIHL…FGAF), 203-218 (IAAG…FHLS), 237-252 (VLSS…AFVV), and 457-472 (SFAL…HGSR).

Belongs to the PsbB/PsbC family. PsbB subfamily. In terms of assembly, PSII is composed of 1 copy each of membrane proteins PsbA, PsbB, PsbC, PsbD, PsbE, PsbF, PsbH, PsbI, PsbJ, PsbK, PsbL, PsbM, PsbT, PsbX, PsbY, PsbZ, Psb30/Ycf12, at least 3 peripheral proteins of the oxygen-evolving complex and a large number of cofactors. It forms dimeric complexes. Requires Binds multiple chlorophylls. PSII binds additional chlorophylls, carotenoids and specific lipids. as cofactor.

It is found in the plastid. The protein resides in the chloroplast thylakoid membrane. One of the components of the core complex of photosystem II (PSII). It binds chlorophyll and helps catalyze the primary light-induced photochemical processes of PSII. PSII is a light-driven water:plastoquinone oxidoreductase, using light energy to abstract electrons from H(2)O, generating O(2) and a proton gradient subsequently used for ATP formation. This is Photosystem II CP47 reaction center protein from Populus trichocarpa (Western balsam poplar).